Reading from the N-terminus, the 84-residue chain is Three-finger toxin MALT0070C (84 aa).

The first 21 residues, 1–21, serve as a signal peptide directing secretion; the sequence is MKTLLLTLVVVTIVCLDLGYT. Cystine bridges form between cysteine 24–cysteine 43, cysteine 36–cysteine 60, cysteine 64–cysteine 71, and cysteine 72–cysteine 77.

The protein belongs to the three-finger toxin family. Short-chain subfamily. Expressed by the venom gland.

The protein resides in the secreted. The chain is Three-finger toxin MALT0070C from Micrurus altirostris (Uruguayan coral snake).